The following is a 259-amino-acid chain: 3-oxo-5-alpha-steroid 4-dehydrogenase 1 (259 aa).

Transmembrane regions (helical) follow at residues 10 to 30 (LCLLDMLVYLEGFMAFVSIVG), 86 to 106 (VLLAMFLIHYVQRTLVFPVLI), 111 to 131 (PTLLVTFVLAFLFCTFNGYVQ), 146 to 166 (VTHPCFLTGFALWLVGMVINI), and 206 to 226 (WCGFALASWSLQGVVFALFTL).

It belongs to the steroid 5-alpha reductase family. Liver and prostate (at a low level).

It localises to the microsome membrane. It is found in the endoplasmic reticulum membrane. The catalysed reaction is a 3-oxo-5alpha-steroid + NADP(+) = a 3-oxo-Delta(4)-steroid + NADPH + H(+). It catalyses the reaction 5alpha-pregnane-3,20-dione + NADP(+) = progesterone + NADPH + H(+). The enzyme catalyses 17beta-hydroxy-5alpha-androstan-3-one + NADP(+) = testosterone + NADPH + H(+). It carries out the reaction androst-4-ene-3,17-dione + NADPH + H(+) = 5alpha-androstan-3,17-dione + NADP(+). In terms of biological role, converts testosterone into 5-alpha-dihydrotestosterone and progesterone or corticosterone into their corresponding 5-alpha-3-oxosteroids. It plays a central role in sexual differentiation and androgen physiology. This Rattus norvegicus (Rat) protein is 3-oxo-5-alpha-steroid 4-dehydrogenase 1.